The following is a 238-amino-acid chain: Probable transglycosylase SceD 3 (238 aa).

Residues 1-27 (MKKTVVASTLAVGLGVTGFAAGNSADA) form the signal peptide. The disordered stretch occupies residues 82-161 (YGQGSTNAPA…SEASEGSSVN (80 aa)). Over residues 89-156 (APAQETAEQP…NESSSSEASE (68 aa)) the composition is skewed to low complexity.

It belongs to the transglycosylase family. SceD subfamily.

It is found in the secreted. Functionally, is able to cleave peptidoglycan and affects clumping and separation of bacterial cells. This Staphylococcus saprophyticus subsp. saprophyticus (strain ATCC 15305 / DSM 20229 / NCIMB 8711 / NCTC 7292 / S-41) protein is Probable transglycosylase SceD 3 (sceD3).